A 156-amino-acid chain; its full sequence is Transcription antitermination protein NusB (156 aa).

Belongs to the NusB family.

Involved in transcription antitermination. Required for transcription of ribosomal RNA (rRNA) genes. Binds specifically to the boxA antiterminator sequence of the ribosomal RNA (rrn) operons. The chain is Transcription antitermination protein NusB from Rickettsia africae (strain ESF-5).